Consider the following 186-residue polypeptide: Tumor necrosis factor alpha-induced protein 8-like protein 1 (186 aa).

The protein belongs to the TNFAIP8 family.

It localises to the cytoplasm. The polypeptide is Tumor necrosis factor alpha-induced protein 8-like protein 1 (TNFAIP8L1) (Gallus gallus (Chicken)).